A 329-amino-acid chain; its full sequence is Secretory carrier-associated membrane protein 2 (329 aa).

Positions 1–74 (MSAFDTNPFA…PSVEPAQPTP (74 aa)) are disordered. The Cytoplasmic segment spans residues 1 to 153 (MSAFDTNPFA…DYQRICKMLY (153 aa)). 2 stretches are compositionally biased toward polar residues: residues 19-31 (QDPS…NAPQ) and 40-51 (FSETNAATTVPA). The chain crosses the membrane as a helical span at residues 154–174 (YLWMLHSVTLFLNLLACLAWF). Residues 175-181 (TSDAANG) lie on the Lumenal side of the membrane. A helical membrane pass occupies residues 182–202 (TAFGLSILWFLIFTPCAFLCW). Topologically, residues 203–218 (YRPIYKAFRSDNSFSF) are cytoplasmic. The interval 203–218 (YRPIYKAFRSDNSFSF) is interaction with SLC9A7. The helical transmembrane segment at 219–239 (FVFFFVFFCQIGIYFIQLIGL) threads the bilayer. Residues 240–262 (PNLGTSGWLAALSTMKNGPLAVT) lie on the Lumenal side of the membrane. A helical membrane pass occupies residues 263-283 (IIMMVVAGFFTLCAGLSLFLL). Residues 284 to 329 (QRVHAFYRRTGASFQQAQEEFSQGIFSSRTFRGAASSAARGAFQGN) are Cytoplasmic-facing. Serine 319 and serine 320 each carry phosphoserine.

This sequence belongs to the SCAMP family. As to quaternary structure, interacts with SLC6A4 and SLC9A7. Interacts with SLC9A5; this interaction regulates SLC9A5 cell-surface targeting and SLC9A5 activity.

It localises to the golgi apparatus. Its subcellular location is the trans-Golgi network membrane. It is found in the recycling endosome membrane. Functionally, functions in post-Golgi recycling pathways. Acts as a recycling carrier to the cell surface. The polypeptide is Secretory carrier-associated membrane protein 2 (Scamp2) (Mus musculus (Mouse)).